The following is a 184-amino-acid chain: ATP synthase subunit b (184 aa).

Residues Val15 to Leu34 form a helical membrane-spanning segment.

This sequence belongs to the ATPase B chain family. In terms of assembly, F-type ATPases have 2 components, F(1) - the catalytic core - and F(0) - the membrane proton channel. F(1) has five subunits: alpha(3), beta(3), gamma(1), delta(1), epsilon(1). F(0) has three main subunits: a(1), b(2) and c(10-14). The alpha and beta chains form an alternating ring which encloses part of the gamma chain. F(1) is attached to F(0) by a central stalk formed by the gamma and epsilon chains, while a peripheral stalk is formed by the delta and b chains.

Its subcellular location is the cell inner membrane. In terms of biological role, f(1)F(0) ATP synthase produces ATP from ADP in the presence of a proton or sodium gradient. F-type ATPases consist of two structural domains, F(1) containing the extramembraneous catalytic core and F(0) containing the membrane proton channel, linked together by a central stalk and a peripheral stalk. During catalysis, ATP synthesis in the catalytic domain of F(1) is coupled via a rotary mechanism of the central stalk subunits to proton translocation. Component of the F(0) channel, it forms part of the peripheral stalk, linking F(1) to F(0). The protein is ATP synthase subunit b of Myxococcus xanthus (strain DK1622).